A 770-amino-acid polypeptide reads, in one-letter code: Probable methyltransferase PMT25 (770 aa).

At 1 to 17 the chain is on the cytoplasmic side; sequence MAMGKYSRVDGKKSSSY. Residues 18 to 38 form a helical; Signal-anchor for type II membrane protein membrane-spanning segment; that stretch reads GLTITIVLLLSLCLVGTWMFM. Residues 39-770 lie on the Lumenal side of the membrane; that stretch reads SSWSAPADSA…ETETIKSAIA (732 aa). Positions 44 to 238 are disordered; the sequence is PADSAGYSST…SSISKDQSSY (195 aa). Residues 55 to 79 show a composition bias toward basic and acidic residues; the sequence is TAKDVSKNDLRKEEGDRDPKNFSDE. Asn-75 and Asn-107 each carry an N-linked (GlcNAc...) asparagine glycan. Residues 92 to 109 are compositionally biased toward polar residues; it reads QVKTDSENSAEGNQVNES. Composition is skewed to basic and acidic residues over residues 110-124 and 131-177; these read SGEKTEAGEERKESD and DGEK…KAEE. N-linked (GlcNAc...) asparagine glycosylation is found at Asn-163 and Asn-178. Composition is skewed to polar residues over residues 205–220 and 227–238; these read ESSTGDGAWSTQLVES and QQSSISKDQSSY. Asn-244 and Asn-363 each carry an N-linked (GlcNAc...) asparagine glycan.

This sequence belongs to the methyltransferase superfamily.

The protein localises to the golgi apparatus membrane. This chain is Probable methyltransferase PMT25, found in Arabidopsis thaliana (Mouse-ear cress).